A 184-amino-acid polypeptide reads, in one-letter code: Photosystem I assembly protein Ycf4 (184 aa).

The next 2 membrane-spanning stretches (helical) occupy residues 25–45 (ACIL…SYLG) and 57–77 (ILFV…LFIS).

The protein belongs to the Ycf4 family.

The protein localises to the plastid. Its subcellular location is the chloroplast thylakoid membrane. Functionally, seems to be required for the assembly of the photosystem I complex. In Cycas taitungensis (Prince sago), this protein is Photosystem I assembly protein Ycf4.